A 436-amino-acid chain; its full sequence is 3-ketoacyl-CoA thiolase (436 aa).

Residue Cys99 is the Acyl-thioester intermediate of the active site. Catalysis depends on proton acceptor residues His392 and Cys422.

This sequence belongs to the thiolase-like superfamily. Thiolase family. In terms of assembly, heterotetramer of two alpha chains (FadJ) and two beta chains (FadI).

It localises to the cytoplasm. It catalyses the reaction an acyl-CoA + acetyl-CoA = a 3-oxoacyl-CoA + CoA. The protein operates within lipid metabolism; fatty acid beta-oxidation. In terms of biological role, catalyzes the final step of fatty acid oxidation in which acetyl-CoA is released and the CoA ester of a fatty acid two carbons shorter is formed. The protein is 3-ketoacyl-CoA thiolase of Escherichia coli O127:H6 (strain E2348/69 / EPEC).